Reading from the N-terminus, the 1023-residue chain is 2-oxoglutarate dehydrogenase complex component E1 (1023 aa).

A mitochondrion-targeting transit peptide spans 1–40; that stretch reads MFHLRTCAAKLRPLTASQTVKTFSQNRPAAARTFQQIRCY. Lys-74 is subject to N6-succinyllysine. Ser-100 is subject to Phosphoserine. Ca(2+) contacts are provided by His-143, Asp-156, and Asp-158. Position 312 (Arg-312) interacts with thiamine diphosphate. An N6-acetyllysine modification is found at Lys-401. Residues Asp-411, Asn-444, and Ile-446 each coordinate thiamine diphosphate. Residues Asp-411, Asn-444, and Ile-446 each contribute to the Mg(2+) site. Residue Lys-534 forms a Glycyl lysine isopeptide (Lys-Gly) (interchain with G-Cter in ubiquitin) linkage. At Lys-564 the chain carries N6-succinyllysine. Thiamine diphosphate is bound at residue Gln-676. Lys-970 bears the N6-acetyllysine mark.

The protein belongs to the alpha-ketoglutarate dehydrogenase family. Homodimer. The 2-oxoglutarate dehydrogenase complex is composed of OGDH (2-oxoglutarate dehydrogenase; E1), DLST (dihydrolipoamide succinyltransferase; E2), DLD (dihydrolipoamide dehydrogenase; E3) and the assembly factor KGD4. It contains multiple copies of the three enzymatic components (E1, E2 and E3). In the nucleus, the 2-oxoglutarate dehydrogenase complex associates with KAT2A. Interacts with ABHD11; this interaction maintains the functional lipoylation of the 2-oxoglutarate dehydrogenase complex. Thiamine diphosphate is required as a cofactor. Requires Mg(2+) as cofactor.

Its subcellular location is the mitochondrion. The protein resides in the nucleus. The enzyme catalyses N(6)-[(R)-lipoyl]-L-lysyl-[protein] + 2-oxoglutarate + H(+) = N(6)-[(R)-S(8)-succinyldihydrolipoyl]-L-lysyl-[protein] + CO2. Calcium ions and ADP stimulate, whereas ATP and NADH reduce catalytic activity. 2-oxoglutarate dehydrogenase (E1o) component of the 2-oxoglutarate dehydrogenase complex (OGDHC). Participates in the first step, rate limiting for the overall conversion of 2-oxoglutarate to succinyl-CoA and CO(2) catalyzed by the whole OGDHC. Catalyzes the irreversible decarboxylation of 2-oxoglutarate (alpha-ketoglutarate) via the thiamine diphosphate (ThDP) cofactor and subsequent transfer of the decarboxylated acyl intermediate on an oxidized dihydrolipoyl group that is covalently amidated to the E2 enzyme (dihydrolipoyllysine-residue succinyltransferase or DLST). Plays a key role in the Krebs (citric acid) cycle, which is a common pathway for oxidation of fuel molecules, including carbohydrates, fatty acids, and amino acids. Can catalyze the decarboxylation of 2-oxoadipate in vitro, but at a much lower rate than 2-oxoglutarate. Mainly active in the mitochondrion. A fraction of the 2-oxoglutarate dehydrogenase complex also localizes in the nucleus and is required for lysine succinylation of histones: associates with KAT2A on chromatin and provides succinyl-CoA to histone succinyltransferase KAT2A. The protein is 2-oxoglutarate dehydrogenase complex component E1 of Pongo abelii (Sumatran orangutan).